We begin with the raw amino-acid sequence, 482 residues long: Chromosomal replication initiator protein DnaA (482 aa).

Positions 1-71 are domain I, interacts with DnaA modulators; sequence MKQSILFERV…TGLFQAEDPE (71 aa). Residues 71–139 form a domain II region; it reads EILKIEVLVR…ASFGSPLFGS (69 aa). Positions 140 to 362 are domain III, AAA+ region; that stretch reads PLDSRFTFDT…GAFNQLVFRR (223 aa). Gly-186, Gly-188, Lys-189, and Thr-190 together coordinate ATP. Positions 363–482 are domain IV, binds dsDNA; that stretch reads SFEPNLSIER…VELLKRLINE (120 aa).

Belongs to the DnaA family. In terms of assembly, oligomerizes as a right-handed, spiral filament on DNA at oriC.

It localises to the cytoplasm. Its function is as follows. Plays an essential role in the initiation and regulation of chromosomal replication. ATP-DnaA binds to the origin of replication (oriC) to initiate formation of the DNA replication initiation complex once per cell cycle. Binds the DnaA box (a 9 base pair repeat at the origin) and separates the double-stranded (ds)DNA. Forms a right-handed helical filament on oriC DNA; dsDNA binds to the exterior of the filament while single-stranded (ss)DNA is stabiized in the filament's interior. The ATP-DnaA-oriC complex binds and stabilizes one strand of the AT-rich DNA unwinding element (DUE), permitting loading of DNA polymerase. After initiation quickly degrades to an ADP-DnaA complex that is not apt for DNA replication. Binds acidic phospholipids. The chain is Chromosomal replication initiator protein DnaA from Rhizobium johnstonii (strain DSM 114642 / LMG 32736 / 3841) (Rhizobium leguminosarum bv. viciae).